Here is a 638-residue protein sequence, read N- to C-terminus: Influenza virus NS1A-binding protein homolog (638 aa).

Residues 32 to 99 enclose the BTB domain; sequence CDVKLQVCGH…AYTSQLKAET (68 aa). The BACK domain occupies 134–233; that stretch reads GISCRNFVNT…YYSADHKLLD (100 aa). The disordered stretch occupies residues 251-273; sequence IQKKSPRENNHKNLISSSSGSLS. 6 Kelch repeats span residues 365 to 411, 412 to 459, 461 to 508, 509 to 555, 557 to 602, and 604 to 638; these read KLIA…VLMD, HLYV…ALNG, LYVV…ELGN, KIYI…VYDG, LLVV…AVGN, and IYAAGGFDGNEFLNTVEVYNPQTDEWSPFTQLCES.

It localises to the cytoplasm. Its subcellular location is the cytoskeleton. The protein resides in the nucleus. Its function is as follows. Plays a role in cell division and in the dynamic organization of the actin skeleton as a stabilizer of actin filaments by association with F-actin through Kelch repeats. This is Influenza virus NS1A-binding protein homolog (ivns1abp) from Xenopus laevis (African clawed frog).